A 1183-amino-acid polypeptide reads, in one-letter code: DNA-directed RNA polymerase subunit beta (1183 aa).

Belongs to the RNA polymerase beta chain family. In terms of assembly, the RNAP catalytic core consists of 2 alpha, 1 beta, 1 beta' and 1 omega subunit. When a sigma factor is associated with the core the holoenzyme is formed, which can initiate transcription.

It catalyses the reaction RNA(n) + a ribonucleoside 5'-triphosphate = RNA(n+1) + diphosphate. DNA-dependent RNA polymerase catalyzes the transcription of DNA into RNA using the four ribonucleoside triphosphates as substrates. This is DNA-directed RNA polymerase subunit beta from Staphylococcus aureus (strain JH9).